The chain runs to 179 residues: Adenine phosphoribosyltransferase (179 aa).

This sequence belongs to the purine/pyrimidine phosphoribosyltransferase family. As to quaternary structure, homodimer.

The protein resides in the cytoplasm. The catalysed reaction is AMP + diphosphate = 5-phospho-alpha-D-ribose 1-diphosphate + adenine. Its pathway is purine metabolism; AMP biosynthesis via salvage pathway; AMP from adenine: step 1/1. Catalyzes a salvage reaction resulting in the formation of AMP, that is energically less costly than de novo synthesis. The polypeptide is Adenine phosphoribosyltransferase (Nitrobacter winogradskyi (strain ATCC 25391 / DSM 10237 / CIP 104748 / NCIMB 11846 / Nb-255)).